The primary structure comprises 383 residues: Alkanesulfonate monooxygenase (383 aa).

It belongs to the SsuD family. Homotetramer.

The catalysed reaction is an alkanesulfonate + FMNH2 + O2 = an aldehyde + FMN + sulfite + H2O + 2 H(+). In terms of biological role, catalyzes the desulfonation of aliphatic sulfonates. The sequence is that of Alkanesulfonate monooxygenase from Erwinia pyrifoliae (strain DSM 12163 / CIP 106111 / Ep16/96).